Consider the following 1126-residue polypeptide: Probable serine/threonine-protein kinase DDB_G0280111 (1126 aa).

The region spanning 16–295 is the Protein kinase domain; that stretch reads LNFVKQIAEG…NLLRNQQPLF (280 aa). ATP is bound by residues 22–30 and K45; that span reads IAEGGFSYV. Catalysis depends on D147, which acts as the Proton acceptor. Low complexity predominate over residues 314 to 333; that stretch reads NNNNNINNNNNNNIVNGKNI. 4 disordered regions span residues 314-469, 760-901, 944-1072, and 1095-1126; these read NNNN…NGNN, LNLN…QQQQ, TPSS…DEVR, and NKQSRMNNPNNLFDEGDSGFGDGEEEDEGLLN. Residues 347–364 are compositionally biased toward pro residues; it reads TPTPPPPAPSQSPSPSPS. Residues 367–390 are compositionally biased toward polar residues; it reads VVNNIENNSNGLEHSNSNGNISQP. Composition is skewed to low complexity over residues 413 to 422, 432 to 469, and 760 to 795; these read PPNNSNNSFD, NLSNNPFNVNSNDNSNSSNNNNNNNNNNNNNNNNNGNN, and LNLNNNNNNNNNSNNSNNSNNSNSGNLSGNASLNSS. Polar residues-rich tracts occupy residues 796–825 and 833–845; these read FDNINSSNPFSTEPTFNPFSATTTNTSESG and EPTSNPSPRYQQS. The span at 846–856 shows a compositional bias: low complexity; the sequence is NNNNNNNNNNN. The segment covering 857–866 has biased composition (polar residues); it reads GTPISLTPGS. Low complexity-rich tracts occupy residues 886-901, 953-971, and 1003-1035; these read QQQQHPQQQQQQQQQQ, PSTGPTTAAQQQQQQQQSQ, and NVNINNNNNSHVSAPHSLNSSSSSISSISNPNL. The segment covering 1095–1105 has biased composition (polar residues); sequence NKQSRMNNPNN. Over residues 1108-1126 the composition is skewed to acidic residues; it reads DEGDSGFGDGEEEDEGLLN.

The protein belongs to the protein kinase superfamily. Ser/Thr protein kinase family.

It catalyses the reaction L-seryl-[protein] + ATP = O-phospho-L-seryl-[protein] + ADP + H(+). The catalysed reaction is L-threonyl-[protein] + ATP = O-phospho-L-threonyl-[protein] + ADP + H(+). The polypeptide is Probable serine/threonine-protein kinase DDB_G0280111 (Dictyostelium discoideum (Social amoeba)).